A 273-amino-acid polypeptide reads, in one-letter code: MTKLIIHLVSDSSVQTAKYTANSALAQFTSVKPKLYHWPMIRNLELLNEVLSKIEYKHGIVLYTIADQELRKTLTKFCYELKIPCISVIGKIIKEMSVFSGIEIEKEQNYNYKFDKTYFDTLNAIDYAIRHDDGQMLNELSEADIILIGPSRTSKTPTSVFLAYNGLKAANIPYVYNCPFPDFIEKDIDQLVVGLVINPNRLIEIREARLNLLQINENKSYTDFNIVQKECLEVRKICDQRNWPVIDVSTRSIEETAALIMRIYYNRKNKYNK.

Position 149–156 (149–156 (GPSRTSKT)) interacts with ADP.

The protein belongs to the pyruvate, phosphate/water dikinase regulatory protein family. PDRP subfamily.

The catalysed reaction is N(tele)-phospho-L-histidyl/L-threonyl-[pyruvate, phosphate dikinase] + ADP = N(tele)-phospho-L-histidyl/O-phospho-L-threonyl-[pyruvate, phosphate dikinase] + AMP + H(+). The enzyme catalyses N(tele)-phospho-L-histidyl/O-phospho-L-threonyl-[pyruvate, phosphate dikinase] + phosphate + H(+) = N(tele)-phospho-L-histidyl/L-threonyl-[pyruvate, phosphate dikinase] + diphosphate. In terms of biological role, bifunctional serine/threonine kinase and phosphorylase involved in the regulation of the pyruvate, phosphate dikinase (PPDK) by catalyzing its phosphorylation/dephosphorylation. The protein is Putative pyruvate, phosphate dikinase regulatory protein of Rickettsia conorii (strain ATCC VR-613 / Malish 7).